The primary structure comprises 538 residues: Bifunctional purine biosynthesis protein PurH (538 aa).

An MGS-like domain is found at isoleucine 8–threonine 158.

Belongs to the PurH family.

The enzyme catalyses (6R)-10-formyltetrahydrofolate + 5-amino-1-(5-phospho-beta-D-ribosyl)imidazole-4-carboxamide = 5-formamido-1-(5-phospho-D-ribosyl)imidazole-4-carboxamide + (6S)-5,6,7,8-tetrahydrofolate. The catalysed reaction is IMP + H2O = 5-formamido-1-(5-phospho-D-ribosyl)imidazole-4-carboxamide. Its pathway is purine metabolism; IMP biosynthesis via de novo pathway; 5-formamido-1-(5-phospho-D-ribosyl)imidazole-4-carboxamide from 5-amino-1-(5-phospho-D-ribosyl)imidazole-4-carboxamide (10-formyl THF route): step 1/1. The protein operates within purine metabolism; IMP biosynthesis via de novo pathway; IMP from 5-formamido-1-(5-phospho-D-ribosyl)imidazole-4-carboxamide: step 1/1. The protein is Bifunctional purine biosynthesis protein PurH of Mesorhizobium japonicum (strain LMG 29417 / CECT 9101 / MAFF 303099) (Mesorhizobium loti (strain MAFF 303099)).